The sequence spans 274 residues: 2,3,4,5-tetrahydropyridine-2,6-dicarboxylate N-succinyltransferase (274 aa).

The protein belongs to the transferase hexapeptide repeat family.

The protein localises to the cytoplasm. It carries out the reaction (S)-2,3,4,5-tetrahydrodipicolinate + succinyl-CoA + H2O = (S)-2-succinylamino-6-oxoheptanedioate + CoA. It participates in amino-acid biosynthesis; L-lysine biosynthesis via DAP pathway; LL-2,6-diaminopimelate from (S)-tetrahydrodipicolinate (succinylase route): step 1/3. This is 2,3,4,5-tetrahydropyridine-2,6-dicarboxylate N-succinyltransferase from Escherichia coli (strain SMS-3-5 / SECEC).